A 292-amino-acid chain; its full sequence is Acetyl-coenzyme A carboxylase carboxyl transferase subunit beta (292 aa).

In terms of domain architecture, CoA carboxyltransferase N-terminal spans 35–292 (VFSQCEQCNS…LKLHAKKVTS (258 aa)). Zn(2+) is bound by residues cysteine 39, cysteine 42, cysteine 58, and cysteine 61. The C4-type zinc finger occupies 39-61 (CEQCNSAIYNKDLEHNYEVCPYC).

It belongs to the AccD/PCCB family. In terms of assembly, acetyl-CoA carboxylase is a heterohexamer composed of biotin carboxyl carrier protein (AccB), biotin carboxylase (AccC) and two subunits each of ACCase subunit alpha (AccA) and ACCase subunit beta (AccD). It depends on Zn(2+) as a cofactor.

Its subcellular location is the cytoplasm. It catalyses the reaction N(6)-carboxybiotinyl-L-lysyl-[protein] + acetyl-CoA = N(6)-biotinyl-L-lysyl-[protein] + malonyl-CoA. It participates in lipid metabolism; malonyl-CoA biosynthesis; malonyl-CoA from acetyl-CoA: step 1/1. Component of the acetyl coenzyme A carboxylase (ACC) complex. Biotin carboxylase (BC) catalyzes the carboxylation of biotin on its carrier protein (BCCP) and then the CO(2) group is transferred by the transcarboxylase to acetyl-CoA to form malonyl-CoA. This is Acetyl-coenzyme A carboxylase carboxyl transferase subunit beta from Acholeplasma laidlawii (strain PG-8A).